We begin with the raw amino-acid sequence, 458 residues long: MSDTNEENRDEPTVVIVGPNDAQTETTDSTVNVETSSDADKNRVALEANINAQVVAMDEDQYYDQLELRANEVAADAEIYEAPDQPANYRNSGIIDLYDEAKDFLDSSATPQWNDKFWGLIDMGGHCNAGANAIFRTVIKALLYKKYYGAFPIIGDEYDSNKQDMVGSSKDSFYTILGLRNNDKPGKLTHIEAAILDMCTNLVCSQRNPKVWFFVSDAQVGRFMLDFQKHMEVRYGQNAHGSISIFTGPIPLRERNYGQNEGSLDLYEVAQVLQCVQNAETDHQVYQLATSPNQLYFKTRVAVKDGQDVIKHVPVEGGLYVKTYAPEFKHPEKLDGQYVEPRYEGNEIGKDVEYTLMDPTTDYHRVGASRVKRYGDTLMEYTETIPRPECGLIVLLNQCYYFAKARLNPFALLEMRLRSRGGAANRIVSRWLEKGEPLMAHDVVQTLENVVLDGAMQN.

Residues 1–12 (MSDTNEENRDEP) are compositionally biased toward basic and acidic residues. The interval 1-27 (MSDTNEENRDEPTVVIVGPNDAQTETT) is disordered.

The protein is Putative non-structural protein 2 (S8) of Micromonas pusilla (Picoplanktonic green alga).